We begin with the raw amino-acid sequence, 492 residues long: N-succinylglutamate 5-semialdehyde dehydrogenase (492 aa).

Glycine 220–glycine 225 lines the NAD(+) pocket. Catalysis depends on residues glutamate 243 and cysteine 277.

The protein belongs to the aldehyde dehydrogenase family. AstD subfamily.

It carries out the reaction N-succinyl-L-glutamate 5-semialdehyde + NAD(+) + H2O = N-succinyl-L-glutamate + NADH + 2 H(+). Its pathway is amino-acid degradation; L-arginine degradation via AST pathway; L-glutamate and succinate from L-arginine: step 4/5. In terms of biological role, catalyzes the NAD-dependent reduction of succinylglutamate semialdehyde into succinylglutamate. The protein is N-succinylglutamate 5-semialdehyde dehydrogenase of Salmonella schwarzengrund (strain CVM19633).